A 406-amino-acid polypeptide reads, in one-letter code: Succinylornithine transaminase (406 aa).

K252 is modified (N6-(pyridoxal phosphate)lysine).

It belongs to the class-III pyridoxal-phosphate-dependent aminotransferase family. AstC subfamily. Pyridoxal 5'-phosphate is required as a cofactor.

The enzyme catalyses N(2)-succinyl-L-ornithine + 2-oxoglutarate = N-succinyl-L-glutamate 5-semialdehyde + L-glutamate. It functions in the pathway amino-acid degradation; L-arginine degradation via AST pathway; L-glutamate and succinate from L-arginine: step 3/5. Functionally, catalyzes the transamination of N(2)-succinylornithine and alpha-ketoglutarate into N(2)-succinylglutamate semialdehyde and glutamate. Can also act as an acetylornithine aminotransferase. In Shigella sonnei (strain Ss046), this protein is Succinylornithine transaminase.